Reading from the N-terminus, the 957-residue chain is Glycine dehydrogenase (decarboxylating) (957 aa).

Lys-708 carries the post-translational modification N6-(pyridoxal phosphate)lysine.

This sequence belongs to the GcvP family. The glycine cleavage system is composed of four proteins: P, T, L and H. Pyridoxal 5'-phosphate serves as cofactor.

It catalyses the reaction N(6)-[(R)-lipoyl]-L-lysyl-[glycine-cleavage complex H protein] + glycine + H(+) = N(6)-[(R)-S(8)-aminomethyldihydrolipoyl]-L-lysyl-[glycine-cleavage complex H protein] + CO2. Functionally, the glycine cleavage system catalyzes the degradation of glycine. The P protein binds the alpha-amino group of glycine through its pyridoxal phosphate cofactor; CO(2) is released and the remaining methylamine moiety is then transferred to the lipoamide cofactor of the H protein. This Escherichia coli (strain ATCC 8739 / DSM 1576 / NBRC 3972 / NCIMB 8545 / WDCM 00012 / Crooks) protein is Glycine dehydrogenase (decarboxylating).